A 947-amino-acid polypeptide reads, in one-letter code: Translation initiation factor IF-2 (947 aa).

Residues 69–353 (RRRKEVPQEE…TPKPQKKTEV (285 aa)) form a disordered region. Low complexity predominate over residues 81–108 (APPAAAEEPSSVDTAVAEEAPAEEVQPV). The span at 139-155 (PVVEEVIAEPAVEEVVE) shows a compositional bias: acidic residues. Composition is skewed to basic and acidic residues over residues 215 to 226 (VTKEKPKVEKAT) and 246 to 262 (KRQE…ERPK). Residues 264–284 (AKPSGGPAPRAKEAAPQAAVP) are compositionally biased toward low complexity. Residues 327-337 (QVYEPERDERR) show a composition bias toward basic and acidic residues. A compositionally biased stretch (basic residues) spans 338–348 (MRRGKKTPKPQ). A tr-type G domain is found at 447-616 (PRPPVVTIMG…LLQAEVLELK (170 aa)). Residues 456–463 (GHVDHGKT) are G1. Position 456-463 (456-463 (GHVDHGKT)) interacts with GTP. The segment at 481–485 (GITQH) is G2. Residues 502-505 (DTPG) are G3. Residues 502–506 (DTPGH) and 556–559 (NKMD) contribute to the GTP site. The tract at residues 556-559 (NKMD) is G4. The G5 stretch occupies residues 592–594 (SAK).

The protein belongs to the TRAFAC class translation factor GTPase superfamily. Classic translation factor GTPase family. IF-2 subfamily.

It localises to the cytoplasm. In terms of biological role, one of the essential components for the initiation of protein synthesis. Protects formylmethionyl-tRNA from spontaneous hydrolysis and promotes its binding to the 30S ribosomal subunits. Also involved in the hydrolysis of GTP during the formation of the 70S ribosomal complex. The polypeptide is Translation initiation factor IF-2 (Syntrophotalea carbinolica (strain DSM 2380 / NBRC 103641 / GraBd1) (Pelobacter carbinolicus)).